We begin with the raw amino-acid sequence, 474 residues long: tRNA-2-methylthio-N(6)-dimethylallyladenosine synthase (474 aa).

Residues 3–120 (KKLHIKTWGC…LPDMIDQVRR (118 aa)) form the MTTase N-terminal domain. The [4Fe-4S] cluster site is built by cysteine 12, cysteine 49, cysteine 83, cysteine 157, cysteine 161, and cysteine 164. The 233-residue stretch at 143–375 (RAEGPTAFVS…QDRITQQAMR (233 aa)) folds into the Radical SAM core domain. In terms of domain architecture, TRAM spans 378–441 (RHMMGTVQRI…TNSLRGKFIR (64 aa)).

This sequence belongs to the methylthiotransferase family. MiaB subfamily. Monomer. It depends on [4Fe-4S] cluster as a cofactor.

It localises to the cytoplasm. It carries out the reaction N(6)-dimethylallyladenosine(37) in tRNA + (sulfur carrier)-SH + AH2 + 2 S-adenosyl-L-methionine = 2-methylsulfanyl-N(6)-dimethylallyladenosine(37) in tRNA + (sulfur carrier)-H + 5'-deoxyadenosine + L-methionine + A + S-adenosyl-L-homocysteine + 2 H(+). In terms of biological role, catalyzes the methylthiolation of N6-(dimethylallyl)adenosine (i(6)A), leading to the formation of 2-methylthio-N6-(dimethylallyl)adenosine (ms(2)i(6)A) at position 37 in tRNAs that read codons beginning with uridine. This is tRNA-2-methylthio-N(6)-dimethylallyladenosine synthase from Shewanella sp. (strain ANA-3).